A 128-amino-acid polypeptide reads, in one-letter code: Small ribosomal subunit protein eS8 (128 aa).

Belongs to the eukaryotic ribosomal protein eS8 family. In terms of assembly, part of the 30S ribosomal subunit.

The sequence is that of Small ribosomal subunit protein eS8 from Methanococcus maripaludis (strain C7 / ATCC BAA-1331).